A 963-amino-acid polypeptide reads, in one-letter code: Protein translocase subunit SecA (963 aa).

ATP contacts are provided by residues Gln-87, 105–109 (GEGKT), and Asp-524. Residues Cys-946, Cys-948, Cys-957, and His-958 each contribute to the Zn(2+) site.

The protein belongs to the SecA family. Monomer and homodimer. Part of the essential Sec protein translocation apparatus which comprises SecA, SecYEG and auxiliary proteins SecDF-YajC and YidC. Zn(2+) serves as cofactor.

It is found in the cell inner membrane. The protein resides in the cytoplasm. The catalysed reaction is ATP + H2O + cellular proteinSide 1 = ADP + phosphate + cellular proteinSide 2.. In terms of biological role, part of the Sec protein translocase complex. Interacts with the SecYEG preprotein conducting channel. Has a central role in coupling the hydrolysis of ATP to the transfer of proteins into and across the cell membrane, serving both as a receptor for the preprotein-SecB complex and as an ATP-driven molecular motor driving the stepwise translocation of polypeptide chains across the membrane. The protein is Protein translocase subunit SecA of Methylobacterium radiotolerans (strain ATCC 27329 / DSM 1819 / JCM 2831 / NBRC 15690 / NCIMB 10815 / 0-1).